Consider the following 328-residue polypeptide: Flotillin-like protein FloA (328 aa).

A run of 2 helical transmembrane segments spans residues 1-21 and 26-46; these read MFGL…LVLF and VGLW…TLVG.

The protein belongs to the flotillin-like FloA family. As to quaternary structure, homooligomerizes.

It localises to the cell membrane. Its subcellular location is the membrane raft. In terms of biological role, found in functional membrane microdomains (FMM) that may be equivalent to eukaryotic membrane rafts. FMMs are highly dynamic and increase in number as cells age. Flotillins are thought to be important factors in membrane fluidity. This Staphylococcus haemolyticus (strain JCSC1435) protein is Flotillin-like protein FloA.